The primary structure comprises 564 residues: Probable metalloprotease ARX1 (564 aa).

The protein belongs to the peptidase M24 family. As to quaternary structure, component of the nucleoplasmic and cytoplasmic pre-60S ribosomal particles.

It is found in the cytoplasm. Its subcellular location is the nucleus. Its function is as follows. Probable metalloprotease involved in proper assembly of pre-ribosomal particles during the biogenesis of the 60S ribosomal subunit. Accompanies the pre-60S particles to the cytoplasm. The polypeptide is Probable metalloprotease ARX1 (ARX1) (Candida albicans (strain SC5314 / ATCC MYA-2876) (Yeast)).